A 407-amino-acid polypeptide reads, in one-letter code: MTTARPNSYRSGPDERGHFGIFGGRFVAETLMPLILDLEKAYADAKADPAFQAEMNSYRTHYVGRPSPLYYAERLTQHLGGAKIYFKRDELNHTGSHKVNNVLGQIMLARRMGKRRIIAETGAGQHGVATATLCARFGLDCVVYMGAVDVERQQPNVLRMEMLGAKVVPVQSGARTLKDAMNEALRDWVTNVHDTFYCIGTVAGPHPYPMMVRDFQSVIGDETRVQMQEAEGRLPDSLVACIGGGSNAMGLFHPFLDDPSVEIFGVEAAGHGLTQLHAASIAGGRPGVLHGNRTYLLMDEDGQIAEAHSISAGLDYPGIGPEHSWLFEAKRVTYLSATDDEALAAFQLLSRLEGIIPALEPAHAIAKVMELAPKKPKEHLMVVNLCGRGDKDVPQVGEILRKRAKES.

Lys98 is subject to N6-(pyridoxal phosphate)lysine.

Belongs to the TrpB family. As to quaternary structure, tetramer of two alpha and two beta chains. Pyridoxal 5'-phosphate serves as cofactor.

The enzyme catalyses (1S,2R)-1-C-(indol-3-yl)glycerol 3-phosphate + L-serine = D-glyceraldehyde 3-phosphate + L-tryptophan + H2O. It participates in amino-acid biosynthesis; L-tryptophan biosynthesis; L-tryptophan from chorismate: step 5/5. Functionally, the beta subunit is responsible for the synthesis of L-tryptophan from indole and L-serine. The polypeptide is Tryptophan synthase beta chain (Bradyrhizobium sp. (strain BTAi1 / ATCC BAA-1182)).